We begin with the raw amino-acid sequence, 72 residues long: Lantibiotic Flvbeta.g (72 aa).

Positions 1–34 are cleaved as a propeptide — cleaved by FlvT; it reads MNNNNFDMEKFKKLAAIVSEGEIDEMLDETTVGA. Positions 36-40 form a cross-link, lanthionine (Ser-Cys); by FlvM2; sequence STLPC. Residues threonine 37, threonine 46, and threonine 48 each carry the 2,3-didehydrobutyrine; by FlvM2 modification. 3 consecutive cross-links (beta-methyllanthionine (Thr-Cys); by FlvM2) follow at residues 55–61, 63–66, and 67–70; these read TTGFDWC, TGAC, and THSC.

In terms of processing, contains LL-lanthionine and DL-beta-methyllanthionine, when coepressed in E.coli with the flavecin synthetase FlvM2.

It is found in the secreted. Its function is as follows. Lanthionine-containing peptide antibiotic (lantibiotic) that is probably weakly active on Gram-positive bacteria, since its analog [Del1]Flvbeta.g shows weak antibacterial activity against M.luteus. This activity is synergistically enhanced by [Del2]Flvalpha.a, an analog of Flvalpha.a, which is encoded by the same operon than Flvbeta.g. The bactericidal activity of lantibiotics is based on depolarization of energized bacterial cytoplasmic membranes, initiated by the formation of aqueous transmembrane pores. The sequence is that of Lantibiotic Flvbeta.g from Ruminococcus flavefaciens.